A 771-amino-acid polypeptide reads, in one-letter code: Choline transporter-like protein 1 (771 aa).

A helical membrane pass occupies residues 96 to 116 (FLFFVFLCGWVVVAGFGIMWG). 2 N-linked (GlcNAc...) asparagine glycosylation sites follow: Asn-141 and Asn-259. 4 helical membrane-spanning segments follow: residues 312–332 (WWQT…WTVI), 335–355 (LLGS…LGFG), 392–412 (LVVA…ILFI), and 441–461 (LFPF…AIWL). Residue Asn-480 is glycosylated (N-linked (GlcNAc...) asparagine). 5 helical membrane-spanning segments follow: residues 514–534 (LFAF…ALAG), 566–586 (LGSI…RVLL), 603–623 (WFLM…KFLT), 662–682 (AGIL…ILSF), and 701–721 (YYFV…DLFF).

It belongs to the CTL (choline transporter-like) family.

The protein resides in the membrane. In Caenorhabditis elegans, this protein is Choline transporter-like protein 1 (chtl-1).